The primary structure comprises 1312 residues: Multidrug resistance protein 3 (1312 aa).

The chain crosses the membrane as a helical span at residues 51–71 (GFIDYILLIGGIIGAMAAGVL). The region spanning 59–369 (IGGIIGAMAA…VAMPINALST (311 aa)) is the ABC transmembrane type-1 1 domain. Asn-98 carries N-linked (GlcNAc...) asparagine glycosylation. Transmembrane regions (helical) follow at residues 127 to 147 (IYFA…FFVL), 197 to 217 (KFGV…IGFS), 224 to 244 (LVIM…GFFA), 302 to 322 (VVGV…ALGS), and 344 to 364 (MVVF…AMPI). Residues 404–643 (IKLEDVQFRY…KATYYGLVKR (240 aa)) enclose the ABC transporter 1 domain. 439–446 (GASGCGKS) lines the ATP pocket. The 310-residue stretch at 724-1033 (LLSFLGLIGG…LGQMIPDVGK (310 aa)) folds into the ABC transmembrane type-1 2 domain. A run of 2 helical transmembrane segments spans residues 725–745 (LSFL…FYMI) and 776–796 (IWIL…LGLF). The N-linked (GlcNAc...) asparagine glycan is linked to Asn-819. A run of 3 helical transmembrane segments spans residues 852–872 (VGNV…AFYY), 874–894 (WKVA…VFLN), and 958–978 (AFVS…SFYI). The ABC transporter 2 domain maps to 1068–1307 (IEFKDICFRY…KGFYYTLAMQ (240 aa)). Position 1103 to 1110 (1103 to 1110 (GASGCGKS)) interacts with ATP.

This sequence belongs to the ABC transporter superfamily. ABCB family. Multidrug resistance exporter (TC 3.A.1.201) subfamily.

The protein localises to the membrane. It carries out the reaction ATP + H2O + xenobioticSide 1 = ADP + phosphate + xenobioticSide 2.. Functionally, energy-dependent efflux pump responsible for decreased drug accumulation in multidrug resistance parasites. The protein is Multidrug resistance protein 3 of Entamoeba histolytica (strain ATCC 30459 / HM-1:IMSS / ABRM).